Consider the following 219-residue polypeptide: 3,4-dihydroxy-2-butanone 4-phosphate synthase (219 aa).

Residues 37–38, Asp42, 150–154, and Glu174 contribute to the D-ribulose 5-phosphate site; these read RE and RRGHT. Glu38 is a Mg(2+) binding site. His153 is a Mg(2+) binding site.

Belongs to the DHBP synthase family. In terms of assembly, homodimer. Mg(2+) is required as a cofactor. It depends on Mn(2+) as a cofactor.

The catalysed reaction is D-ribulose 5-phosphate = (2S)-2-hydroxy-3-oxobutyl phosphate + formate + H(+). It participates in cofactor biosynthesis; riboflavin biosynthesis; 2-hydroxy-3-oxobutyl phosphate from D-ribulose 5-phosphate: step 1/1. Functionally, catalyzes the conversion of D-ribulose 5-phosphate to formate and 3,4-dihydroxy-2-butanone 4-phosphate. The protein is 3,4-dihydroxy-2-butanone 4-phosphate synthase of Oleidesulfovibrio alaskensis (strain ATCC BAA-1058 / DSM 17464 / G20) (Desulfovibrio alaskensis).